The sequence spans 374 residues: DNA replication and repair protein RecF (374 aa).

30-37 provides a ligand contact to ATP; that stretch reads GHNAQGKT.

It belongs to the RecF family.

The protein resides in the cytoplasm. Its function is as follows. The RecF protein is involved in DNA metabolism; it is required for DNA replication and normal SOS inducibility. RecF binds preferentially to single-stranded, linear DNA. It also seems to bind ATP. In Limosilactobacillus reuteri (strain DSM 20016) (Lactobacillus reuteri), this protein is DNA replication and repair protein RecF.